Consider the following 422-residue polypeptide: UDP-N-acetylglucosamine 1-carboxyvinyltransferase (422 aa).

24–25 (KN) contacts phosphoenolpyruvate. Arginine 93 is a UDP-N-acetyl-alpha-D-glucosamine binding site. Catalysis depends on cysteine 117, which acts as the Proton donor. At cysteine 117 the chain carries 2-(S-cysteinyl)pyruvic acid O-phosphothioketal. UDP-N-acetyl-alpha-D-glucosamine contacts are provided by residues 122–126 (RPVDL), 162–165 (KVSV), aspartate 307, and isoleucine 329.

This sequence belongs to the EPSP synthase family. MurA subfamily.

The protein localises to the cytoplasm. It catalyses the reaction phosphoenolpyruvate + UDP-N-acetyl-alpha-D-glucosamine = UDP-N-acetyl-3-O-(1-carboxyvinyl)-alpha-D-glucosamine + phosphate. Its pathway is cell wall biogenesis; peptidoglycan biosynthesis. Cell wall formation. Adds enolpyruvyl to UDP-N-acetylglucosamine. This chain is UDP-N-acetylglucosamine 1-carboxyvinyltransferase, found in Vibrio atlanticus (strain LGP32) (Vibrio splendidus (strain Mel32)).